A 353-amino-acid chain; its full sequence is D-alanine--D-alanine ligase (353 aa).

The 209-residue stretch at 141–349 (KAAFAAAGLP…LEELVSQLVI (209 aa)) folds into the ATP-grasp domain. An ATP-binding site is contributed by 176-231 (EAKLKYPCFVKPANLGSSVGISKAQNRNELLIGLDKAASLDRRIVVEQGVSARELE). Asp-302, Glu-316, and Asn-318 together coordinate Mg(2+).

The protein belongs to the D-alanine--D-alanine ligase family. It depends on Mg(2+) as a cofactor. The cofactor is Mn(2+).

It is found in the cytoplasm. It carries out the reaction 2 D-alanine + ATP = D-alanyl-D-alanine + ADP + phosphate + H(+). The protein operates within cell wall biogenesis; peptidoglycan biosynthesis. Functionally, cell wall formation. In Prochlorococcus marinus (strain MIT 9313), this protein is D-alanine--D-alanine ligase.